We begin with the raw amino-acid sequence, 175 residues long: Co-chaperone protein HscB homolog (175 aa).

The J domain occupies 2–74 (NYFQLFNIEV…LQRAEYILVQ (73 aa)).

This sequence belongs to the HscB family. As to quaternary structure, interacts with HscA and stimulates its ATPase activity.

Co-chaperone involved in the maturation of iron-sulfur cluster-containing proteins. Seems to help targeting proteins to be folded toward HscA. This chain is Co-chaperone protein HscB homolog, found in Colwellia psychrerythraea (strain 34H / ATCC BAA-681) (Vibrio psychroerythus).